Consider the following 358-residue polypeptide: Probable branched-chain-amino-acid aminotransferase (358 aa).

At K196 the chain carries N6-(pyridoxal phosphate)lysine.

Belongs to the class-IV pyridoxal-phosphate-dependent aminotransferase family. Requires pyridoxal 5'-phosphate as cofactor.

The catalysed reaction is L-leucine + 2-oxoglutarate = 4-methyl-2-oxopentanoate + L-glutamate. It catalyses the reaction L-isoleucine + 2-oxoglutarate = (S)-3-methyl-2-oxopentanoate + L-glutamate. The enzyme catalyses L-valine + 2-oxoglutarate = 3-methyl-2-oxobutanoate + L-glutamate. Its pathway is amino-acid biosynthesis; L-isoleucine biosynthesis; L-isoleucine from 2-oxobutanoate: step 4/4. It functions in the pathway amino-acid biosynthesis; L-leucine biosynthesis; L-leucine from 3-methyl-2-oxobutanoate: step 4/4. The protein operates within amino-acid biosynthesis; L-valine biosynthesis; L-valine from pyruvate: step 4/4. Its function is as follows. Acts on leucine, isoleucine and valine. In Staphylococcus aureus (strain N315), this protein is Probable branched-chain-amino-acid aminotransferase (ilvE).